Consider the following 272-residue polypeptide: NH(3)-dependent NAD(+) synthetase (272 aa).

45–52 (GISGGQDS) is a binding site for ATP. Residue aspartate 51 participates in Mg(2+) binding. Residue arginine 138 participates in deamido-NAD(+) binding. Threonine 158 lines the ATP pocket. Glutamate 163 contacts Mg(2+). Lysine 171 and aspartate 178 together coordinate deamido-NAD(+). Residues lysine 187 and threonine 209 each contribute to the ATP site. 258–259 (HK) is a binding site for deamido-NAD(+).

This sequence belongs to the NAD synthetase family. As to quaternary structure, homodimer.

The catalysed reaction is deamido-NAD(+) + NH4(+) + ATP = AMP + diphosphate + NAD(+) + H(+). The protein operates within cofactor biosynthesis; NAD(+) biosynthesis; NAD(+) from deamido-NAD(+) (ammonia route): step 1/1. Functionally, catalyzes the ATP-dependent amidation of deamido-NAD to form NAD. Uses ammonia as a nitrogen source. In Bacillus licheniformis (strain ATCC 14580 / DSM 13 / JCM 2505 / CCUG 7422 / NBRC 12200 / NCIMB 9375 / NCTC 10341 / NRRL NRS-1264 / Gibson 46), this protein is NH(3)-dependent NAD(+) synthetase.